Reading from the N-terminus, the 382-residue chain is Lipid-A-disaccharide synthase (382 aa).

This sequence belongs to the LpxB family.

It catalyses the reaction 2-N,3-O-bis[(3R)-3-hydroxytetradecanoyl]-alpha-D-glucosaminyl 1-phosphate + UDP-2-N,3-O-bis[(3R)-3-hydroxytetradecanoyl]-alpha-D-glucosamine = lipid A disaccharide (E. coli) + UDP + H(+). The catalysed reaction is a lipid X + a UDP-2-N,3-O-bis[(3R)-3-hydroxyacyl]-alpha-D-glucosamine = a lipid A disaccharide + UDP + H(+). Its pathway is glycolipid biosynthesis; lipid IV(A) biosynthesis; lipid IV(A) from (3R)-3-hydroxytetradecanoyl-[acyl-carrier-protein] and UDP-N-acetyl-alpha-D-glucosamine: step 5/6. Functionally, condensation of UDP-2,3-diacylglucosamine and 2,3-diacylglucosamine-1-phosphate to form lipid A disaccharide, a precursor of lipid A, a phosphorylated glycolipid that anchors the lipopolysaccharide to the outer membrane of the cell. This Shigella boydii serotype 18 (strain CDC 3083-94 / BS512) protein is Lipid-A-disaccharide synthase.